The sequence spans 382 residues: Chorismate synthase (382 aa).

Arg39 and Arg45 together coordinate NADP(+). FMN contacts are provided by residues 127–129, 245–246, Gly290, 305–309, and Arg331; these read RAS, QA, and KPIPT.

Belongs to the chorismate synthase family. As to quaternary structure, homotetramer. Requires FMNH2 as cofactor.

The enzyme catalyses 5-O-(1-carboxyvinyl)-3-phosphoshikimate = chorismate + phosphate. Its pathway is metabolic intermediate biosynthesis; chorismate biosynthesis; chorismate from D-erythrose 4-phosphate and phosphoenolpyruvate: step 7/7. In terms of biological role, catalyzes the anti-1,4-elimination of the C-3 phosphate and the C-6 proR hydrogen from 5-enolpyruvylshikimate-3-phosphate (EPSP) to yield chorismate, which is the branch point compound that serves as the starting substrate for the three terminal pathways of aromatic amino acid biosynthesis. This reaction introduces a second double bond into the aromatic ring system. This Desulfitobacterium hafniense (strain Y51) protein is Chorismate synthase.